Consider the following 397-residue polypeptide: Tryptophan synthase beta chain (397 aa).

An N6-(pyridoxal phosphate)lysine modification is found at lysine 88.

It belongs to the TrpB family. In terms of assembly, tetramer of two alpha and two beta chains. It depends on pyridoxal 5'-phosphate as a cofactor.

It carries out the reaction (1S,2R)-1-C-(indol-3-yl)glycerol 3-phosphate + L-serine = D-glyceraldehyde 3-phosphate + L-tryptophan + H2O. The protein operates within amino-acid biosynthesis; L-tryptophan biosynthesis; L-tryptophan from chorismate: step 5/5. In terms of biological role, the beta subunit is responsible for the synthesis of L-tryptophan from indole and L-serine. The protein is Tryptophan synthase beta chain of Shewanella amazonensis (strain ATCC BAA-1098 / SB2B).